Consider the following 874-residue polypeptide: Alanine--tRNA ligase (874 aa).

Residues His563, His567, Cys665, and His669 each contribute to the Zn(2+) site.

The protein belongs to the class-II aminoacyl-tRNA synthetase family. It depends on Zn(2+) as a cofactor.

It localises to the cytoplasm. The enzyme catalyses tRNA(Ala) + L-alanine + ATP = L-alanyl-tRNA(Ala) + AMP + diphosphate. In terms of biological role, catalyzes the attachment of alanine to tRNA(Ala) in a two-step reaction: alanine is first activated by ATP to form Ala-AMP and then transferred to the acceptor end of tRNA(Ala). Also edits incorrectly charged Ser-tRNA(Ala) and Gly-tRNA(Ala) via its editing domain. The protein is Alanine--tRNA ligase of Actinobacillus pleuropneumoniae serotype 3 (strain JL03).